The sequence spans 541 residues: Membrane protein insertase YidC (541 aa).

A run of 6 helical transmembrane segments spans residues 6–26 (NILLIGLLFVSFLLWQQWQAD), 325–345 (LVVDYGFLWWLAVPIHWLLMF), 349–369 (FVGNWGMAIILITLTVRGLLF), 420–440 (GGCLPIILQMPIFIALYWVLL), 457–477 (LSVQDPYYILPLLMGVSMFVM), and 500–520 (VIFTVFFLWFPAGLVLYWLVG).

Belongs to the OXA1/ALB3/YidC family. Type 1 subfamily. As to quaternary structure, interacts with the Sec translocase complex via SecD. Specifically interacts with transmembrane segments of nascent integral membrane proteins during membrane integration.

It localises to the cell inner membrane. Its function is as follows. Required for the insertion and/or proper folding and/or complex formation of integral membrane proteins into the membrane. Involved in integration of membrane proteins that insert both dependently and independently of the Sec translocase complex, as well as at least some lipoproteins. Aids folding of multispanning membrane proteins. This Shewanella baltica (strain OS223) protein is Membrane protein insertase YidC.